The chain runs to 243 residues: Probable transcriptional regulatory protein Ldb0677 (243 aa).

Residues 1–22 (MSGHSKWHNIQGRKNAQDAKRG) form a disordered region.

It belongs to the TACO1 family.

It localises to the cytoplasm. This is Probable transcriptional regulatory protein Ldb0677 from Lactobacillus delbrueckii subsp. bulgaricus (strain ATCC 11842 / DSM 20081 / BCRC 10696 / JCM 1002 / NBRC 13953 / NCIMB 11778 / NCTC 12712 / WDCM 00102 / Lb 14).